The following is a 162-amino-acid chain: Peptidyl-prolyl cis-trans isomerase (162 aa).

In terms of domain architecture, PPIase cyclophilin-type spans 5–161; it reads FFDVQFGGDA…TTIKIVDSGV (157 aa).

It belongs to the cyclophilin-type PPIase family. PPIase A subfamily.

It catalyses the reaction [protein]-peptidylproline (omega=180) = [protein]-peptidylproline (omega=0). Binds cyclosporin A (CsA). CsA mediates some of its effects via an inhibitory action on PPIase. In terms of biological role, PPIases accelerate the folding of proteins. It catalyzes the cis-trans isomerization of proline imidic peptide bonds in oligopeptides. In Paramecium primaurelia, this protein is Peptidyl-prolyl cis-trans isomerase.